The sequence spans 902 residues: Proline-rich transmembrane protein 4 (902 aa).

The signal sequence occupies residues 1-18; that stretch reads MAGRSCLELGLFCWVLLA. 3 disordered regions span residues 72-92, 121-149, and 281-333; these read TETH…EEGD, TPWA…SQPR, and SPSS…LLDD. Composition is skewed to polar residues over residues 122–136 and 281–302; these read PWAS…SRLS and SPSS…STSG. Transmembrane regions (helical) follow at residues 371–391, 393–413, 432–452, 468–488, and 501–521; these read AGAL…LLPW, CPPG…AGTT, LVWL…LGLA, LAAL…GSAV, and GLHA…SCWG. S642 is modified (phosphoserine). Disordered stretches follow at residues 701–723, 774–811, and 839–872; these read AGAN…DFRP, AGPS…SLCG, and PPRP…ASEL. A compositionally biased stretch (polar residues) spans 704–717; the sequence is NPTQSTASSPSSDC. Residues 786–798 are compositionally biased toward pro residues; it reads SPAPPELPSPGAW. Composition is skewed to low complexity over residues 799–811 and 843–854; these read PPGS…SLCG and SESSPSLPASGS.

The protein localises to the membrane. The protein is Proline-rich transmembrane protein 4 (Prrt4) of Mus musculus (Mouse).